The sequence spans 459 residues: Mitochondrial distribution and morphology protein 34 (459 aa).

Positions 1-190 (MSFRFNEAVF…LPSLIFNTSQ (190 aa)) constitute an SMP-LTD domain. A compositionally biased stretch (basic and acidic residues) spans 338–347 (RSNSNDDNAK). The segment at 338–375 (RSNSNDDNAKPRRRKIKCKKTRTPSNLQSQGEQAVDDS) is disordered. A compositionally biased stretch (basic residues) spans 348-359 (PRRRKIKCKKTR).

The protein belongs to the MDM34 family. Component of the ER-mitochondria encounter structure (ERMES) or MDM complex, composed of MMM1, MDM10, MDM12 and MDM34. In terms of processing, ubiquitinated by a SCF (SKP1-CUL1-F-box protein) E3 ubiquitin-protein ligase complex containing the F-box protein MDM30. Ubiquitination is important for mitochondrial integrity.

It localises to the mitochondrion outer membrane. In terms of biological role, component of the ERMES/MDM complex, which serves as a molecular tether to connect the endoplasmic reticulum (ER) and mitochondria. Components of this complex are involved in the control of mitochondrial shape and protein biogenesis, and function in nonvesicular lipid trafficking between the ER and mitochondria. MDM34 is required for the interaction of the ER-resident membrane protein MMM1 and the outer mitochondrial membrane-resident beta-barrel protein MDM10. The sequence is that of Mitochondrial distribution and morphology protein 34 from Saccharomyces cerevisiae (strain AWRI1631) (Baker's yeast).